We begin with the raw amino-acid sequence, 357 residues long: P2Y purinoceptor 8 (357 aa).

Residues 1–26 are Extracellular-facing; that stretch reads MVKNGSHLDAETLAMLQNKAISITLP. Asn-4 is a glycosylation site (N-linked (GlcNAc...) asparagine). Residues 27 to 47 form a helical membrane-spanning segment; it reads VVYTMVAIISIPGNFFSLWVL. Topologically, residues 48–56 are cytoplasmic; that stretch reads CWHIKPKTP. A helical membrane pass occupies residues 57–77; the sequence is SVIFMINLSITDLLLACCFPF. The Extracellular segment spans residues 78 to 97; the sequence is QIFYHIQRNHWIFGKTLCSL. A disulfide bridge connects residues Cys-95 and Cys-174. The chain crosses the membrane as a helical span at residues 98–118; sequence VTVMFYSNMYSSILTMTCISI. Residues 119 to 137 are Cytoplasmic-facing; it reads ERYMGVVYPMKLIKWRRKR. The chain crosses the membrane as a helical span at residues 138–158; the sequence is YALGACVIMWIFLLLAFYPLE. Topologically, residues 159–185 are extracellular; the sequence is STDLTYEVKELGIITCFDVLKWEMLPN. A helical transmembrane segment spans residues 186–206; the sequence is FAAWVAFLLTLFVVLFLIPFI. Residues 207-236 lie on the Cytoplasmic side of the membrane; it reads VTVGCYIGTIRKLIQTSSRYGNKQKTRSIY. A helical transmembrane segment spans residues 237-257; it reads LAIIVLSVFITCFAPNNFILL. The Extracellular portion of the chain corresponds to 258 to 271; that stretch reads AHMIVRLFYEGSLY. The helical transmembrane segment at 272–294 threads the bilayer; the sequence is PAYKLTLCLSCLNNCIDPFIYYF. Residues 295–357 lie on the Cytoplasmic side of the membrane; the sequence is ASKEFYQKFM…ICLQRQESVF (63 aa).

This sequence belongs to the G-protein coupled receptor 1 family.

It localises to the cell membrane. Functionally, probable receptor for purines coupled to G-proteins. The chain is P2Y purinoceptor 8 (P2RY8) from Gallus gallus (Chicken).